Reading from the N-terminus, the 381-residue chain is L-lactate dehydrogenase (381 aa).

Residues 1–380 (MIISASTDYR…SADSLVRELG (380 aa)) enclose the FMN hydroxy acid dehydrogenase domain. A substrate-binding site is contributed by Y24. Residues S106 and Q127 each coordinate FMN. Y129 contributes to the substrate binding site. T155 provides a ligand contact to FMN. R164 contacts substrate. Residue K251 coordinates FMN. H275 (proton acceptor) is an active-site residue. R278 provides a ligand contact to substrate. Residue 306–330 (DSGIRTGLDVVRMIALGADSVLLGR) coordinates FMN.

Belongs to the FMN-dependent alpha-hydroxy acid dehydrogenase family. In terms of assembly, homotetramer. FMN is required as a cofactor.

It is found in the cell inner membrane. The catalysed reaction is (S)-lactate + A = pyruvate + AH2. Its function is as follows. Catalyzes the conversion of L-lactate to pyruvate. Is coupled to the respiratory chain. This is L-lactate dehydrogenase from Pseudomonas paraeruginosa (strain DSM 24068 / PA7) (Pseudomonas aeruginosa (strain PA7)).